We begin with the raw amino-acid sequence, 472 residues long: Calcitonin gene-related peptide type 1 receptor (472 aa).

The first 28 residues, 1–28, serve as a signal peptide directing secretion; that stretch reads MGLLLRSALFKYIIIVLIMLNLRGYVLA. Residues 29-149 are Extracellular-facing; the sequence is EQEQGSQIPL…FTHEKVKTAL (121 aa). Intrachain disulfides connect Cys58/Cys84, Cys75/Cys115, and Cys98/Cys137. Asn76, Asn128, and Asn133 each carry an N-linked (GlcNAc...) asparagine glycan. Residues 150 to 174 form a helical membrane-spanning segment; sequence NLYYLTIIGHGLSIASLLISLGIFF. The Cytoplasmic segment spans residues 175–185; it reads YFKNLSCQRIT. A helical transmembrane segment spans residues 186-208; sequence LHKNLFFSFVCNSIITIISLSAV. Topologically, residues 209-219 are extracellular; sequence ANNQALVATNP. A helical transmembrane segment spans residues 220-248; it reads VSCKISQFIHLYLMGCNYFWMLCEGIYLH. The Cytoplasmic portion of the chain corresponds to 249–262; sequence TLIVVAVFAEKQHL. A helical membrane pass occupies residues 263–283; it reads MWYYLLGWGFPLIPACIHAVA. Residues 284–299 are Extracellular-facing; sequence RSLYYNDNCWISSETH. A helical transmembrane segment spans residues 300 to 324; the sequence is LLYIIHGPICAALLVNLFFLLNIVR. Topologically, residues 325 to 339 are cytoplasmic; sequence VLITKLKVTHQAESN. A helical membrane pass occupies residues 340–361; the sequence is LYMKAVRATLILVPLLGIEFVL. The Extracellular portion of the chain corresponds to 362–376; it reads FPWKPEGRIAEEIYD. Residues 377–397 traverse the membrane as a helical segment; that stretch reads YVMHILMHYQGLLVATIFCFF. Residues 398–472 lie on the Cytoplasmic side of the membrane; that stretch reads NGEVQAVLKR…VFFKTEKQYM (75 aa).

The protein belongs to the G-protein coupled receptor 2 family.

The protein resides in the cell membrane. Functionally, may function as G protein-coupled receptor for calcitonin-gene-related peptides and adrenomedullin. Specificity may be modulated by accessory proteins. May activate cAMP-dependent pathway. The sequence is that of Calcitonin gene-related peptide type 1 receptor (calcrl) from Xenopus tropicalis (Western clawed frog).